A 342-amino-acid chain; its full sequence is Cytoplasmic tRNA 2-thiolation protein 1 (342 aa).

The protein belongs to the TtcA family. CTU1/NCS6/ATPBD3 subfamily.

The protein resides in the cytoplasm. It functions in the pathway tRNA modification; 5-methoxycarbonylmethyl-2-thiouridine-tRNA biosynthesis. In terms of biological role, plays a central role in 2-thiolation of mcm(5)S(2)U at tRNA wobble positions of tRNA(Lys), tRNA(Glu) and tRNA(Gln). Directly binds tRNAs and probably acts by catalyzing adenylation of tRNAs, an intermediate required for 2-thiolation. It is unclear whether it acts as a sulfurtransferase that transfers sulfur from thiocarboxylated URM1 onto the uridine of tRNAs at wobble position. In Anopheles gambiae (African malaria mosquito), this protein is Cytoplasmic tRNA 2-thiolation protein 1.